Here is a 145-residue protein sequence, read N- to C-terminus: D-aminoacyl-tRNA deacylase (145 aa).

The short motif at 137 to 138 is the Gly-cisPro motif, important for rejection of L-amino acids element; sequence GP.

This sequence belongs to the DTD family. As to quaternary structure, homodimer.

It localises to the cytoplasm. The catalysed reaction is glycyl-tRNA(Ala) + H2O = tRNA(Ala) + glycine + H(+). The enzyme catalyses a D-aminoacyl-tRNA + H2O = a tRNA + a D-alpha-amino acid + H(+). Functionally, an aminoacyl-tRNA editing enzyme that deacylates mischarged D-aminoacyl-tRNAs. Also deacylates mischarged glycyl-tRNA(Ala), protecting cells against glycine mischarging by AlaRS. Acts via tRNA-based rather than protein-based catalysis; rejects L-amino acids rather than detecting D-amino acids in the active site. By recycling D-aminoacyl-tRNA to D-amino acids and free tRNA molecules, this enzyme counteracts the toxicity associated with the formation of D-aminoacyl-tRNA entities in vivo and helps enforce protein L-homochirality. The polypeptide is D-aminoacyl-tRNA deacylase (Francisella tularensis subsp. holarctica (strain LVS)).